The sequence spans 213 residues: Protein Flattop (213 aa).

The disordered stretch occupies residues 127 to 213 (VDQPAEQSKI…HNSRPASQEK (87 aa)). The span at 151–213 (QHIQDQSRPA…HNSRPASQEK (63 aa)) shows a compositional bias: polar residues.

The protein belongs to the Flattop family.

Its subcellular location is the cytoplasm. The protein localises to the cytoskeleton. The protein resides in the cilium basal body. It localises to the cell projection. It is found in the cilium. Its subcellular location is the apical cell membrane. The protein localises to the cilium axoneme. Its function is as follows. Microtubule inner protein (MIP) part of the dynein-decorated doublet microtubules (DMTs) in cilia axoneme. Acts as a regulator of cilium basal body docking and positioning in mono- and multiciliated cells. Regulates basal body docking and cilia formation in multiciliated lung cells. Regulates kinocilium positioning and stereocilia bundle morphogenesis in the inner ear. The chain is Protein Flattop from Danio rerio (Zebrafish).